The chain runs to 106 residues: Small ribosomal subunit protein bS18 (106 aa).

The tract at residues 1-39 (MNGRNNDMGRNGGADYDDRDFGRTPDLNADAPGRRRTGR) is disordered.

The protein belongs to the bacterial ribosomal protein bS18 family. Part of the 30S ribosomal subunit. Forms a tight heterodimer with protein bS6.

Binds as a heterodimer with protein bS6 to the central domain of the 16S rRNA, where it helps stabilize the platform of the 30S subunit. The chain is Small ribosomal subunit protein bS18 from Sorangium cellulosum (strain So ce56) (Polyangium cellulosum (strain So ce56)).